The following is a 781-amino-acid chain: Mitogen-activated protein kinase 7 (781 aa).

Positions 1-27 (MAEPLKEDDGEDGSGEPPGPVKAEPAG) are disordered. Ala-2 carries the N-acetylalanine modification. Residues 2-77 (AEPLKEDDGE…VVSSARRRLT (76 aa)) are required for cytoplasmic targeting. The Protein kinase domain maps to 55-347 (YEIIETIGNG…AAAALRHPFL (293 aa)). ATP-binding positions include 61-69 (IGNGAYGVV) and Lys-84. A required for binding to MAP2K5 region spans residues 78-139 (GQQVAIKKIP…FKSVYVVLDL (62 aa)). Residues 140–406 (MESDLHQIIH…QQIRFQPSLQ (267 aa)) are necessary for oligomerization. Asp-182 functions as the Proton acceptor in the catalytic mechanism. The short motif at 219-221 (TEY) is the TXY element. A disordered region spans residues 402–708 (QPSLQPVASE…PKGSGAGYGV (307 aa)). The tract at residues 407–781 (PVASEPGCPD…LADLPDLQEP (375 aa)) is may not be required for kinase activity; required to stimulate MEF2C activity. Pro residues-rich tracts occupy residues 433–445 (SPPPAPLPCPGPA) and 454–463 (QPPPPASEPA). The span at 476 to 486 (KAALKAALLKS) shows a compositional bias: low complexity. Composition is skewed to basic and acidic residues over residues 502–519 (PEPRKPVTAQERQREREE), 527–544 (RAKEREKRRQERERKERG), and 563–573 (DNDRSLLERWT). Positions 505–539 (RKPVTAQERQREREEKRRRRQERAKEREKRRQERE) match the Nuclear localization signal motif. Pro residues-rich tracts occupy residues 578-594 (PPAPAPATARPPSPPAG) and 601-614 (GPLPQPACPPPAPA). Low complexity-rich tracts occupy residues 615-632 (AGPAAPQTTAASGLLAPQ) and 642-652 (GPSALSVLPYF). Residues 653-664 (PSGPPPPDPGGA) show a composition bias toward pro residues. Residues 668–685 (STSESPDVTLVTQQLSKS) are compositionally biased toward polar residues. A Phosphoserine modification is found at Ser-685. The residue at position 698 (Thr-698) is a Phosphothreonine.

It belongs to the protein kinase superfamily. CMGC Ser/Thr protein kinase family. MAP kinase subfamily. Interacts with MAP2K5. Forms oligomers. Interacts with MEF2A, MEF2C and MEF2D; the interaction phosphorylates the MEF2s and enhances transcriptional activity of MEF2A, MEF2C but not MEF2D. Interacts with SGK1. Interacts with PML. Interacts (via N-terminal half) with HSP90AB1-CDC37 chaperone complex in resting cells; the interaction is MAP2K5-independent and prevents MAPK7 from ubiquitination and proteasomal degradation. Interacts with STUB1/CHIP; the interaction is enhanced in the presence of IGF1 or MAP2K5 and promotes STUB1/CHIP E3 ligase activity. Mg(2+) is required as a cofactor. Post-translationally, dually phosphorylated on Thr-219 and Tyr-221, which activates the enzyme.

It localises to the cytoplasm. It is found in the nucleus. The protein localises to the PML body. It carries out the reaction L-seryl-[protein] + ATP = O-phospho-L-seryl-[protein] + ADP + H(+). It catalyses the reaction L-threonyl-[protein] + ATP = O-phospho-L-threonyl-[protein] + ADP + H(+). Activated by tyrosine and threonine phosphorylation. Activated in response to hyperosmolarity, hydrogen peroxide, and epidermal growth factor (EGF). In terms of biological role, plays a role in various cellular processes such as proliferation, differentiation and cell survival. The upstream activator of MAPK7 is the MAPK kinase MAP2K5. Upon activation, it translocates to the nucleus and phosphorylates various downstream targets including MEF2C. EGF activates MAPK7 through a Ras-independent and MAP2K5-dependent pathway. As part of the MAPK/ERK signaling pathway, acts as a negative regulator of apoptosis in cardiomyocytes via interaction with STUB1/CHIP and promotion of STUB1-mediated ubiquitination and degradation of ICER-type isoforms of CREM. May have a role in muscle cell differentiation. May be important for endothelial function and maintenance of blood vessel integrity. MAP2K5 and MAPK7 interact specifically with one another and not with MEK1/ERK1 or MEK2/ERK2 pathways. Phosphorylates SGK1 at Ser-78 and this is required for growth factor-induced cell cycle progression. Involved in the regulation of p53/TP53 by disrupting the PML-MDM2 interaction. The protein is Mitogen-activated protein kinase 7 (MAPK7) of Bos taurus (Bovine).